Here is a 234-residue protein sequence, read N- to C-terminus: Fibrillarin-like rRNA/tRNA 2'-O-methyltransferase (234 aa).

Residues 90-91 (TT), 109-110 (EF), 134-135 (DA), and 154-157 (DIAQ) contribute to the S-adenosyl-L-methionine site.

It belongs to the methyltransferase superfamily. Fibrillarin family. Interacts with nop5. Component of box C/D small ribonucleoprotein (sRNP) particles that contain rpl7ae, FlpA and nop5, plus a guide RNA.

Its function is as follows. Involved in pre-rRNA and tRNA processing. Utilizes the methyl donor S-adenosyl-L-methionine to catalyze the site-specific 2'-hydroxyl methylation of ribose moieties in rRNA and tRNA. Site specificity is provided by a guide RNA that base pairs with the substrate. Methylation occurs at a characteristic distance from the sequence involved in base pairing with the guide RNA. The sequence is that of Fibrillarin-like rRNA/tRNA 2'-O-methyltransferase from Staphylothermus marinus (strain ATCC 43588 / DSM 3639 / JCM 9404 / F1).